The following is a 156-amino-acid chain: Arginine repressor (156 aa).

The protein belongs to the ArgR family.

The protein resides in the cytoplasm. It functions in the pathway amino-acid biosynthesis; L-arginine biosynthesis [regulation]. Functionally, regulates arginine biosynthesis genes. The chain is Arginine repressor from Aliivibrio fischeri (strain ATCC 700601 / ES114) (Vibrio fischeri).